Here is a 629-residue protein sequence, read N- to C-terminus: tRNA uridine 5-carboxymethylaminomethyl modification enzyme MnmG (629 aa).

FAD-binding positions include 13–18, V125, and S180; that span reads GGGHAG. Residue 273 to 287 coordinates NAD(+); it reads GPRYCPSIEDKVMRF. Q370 lines the FAD pocket.

It belongs to the MnmG family. Homodimer. Heterotetramer of two MnmE and two MnmG subunits. It depends on FAD as a cofactor.

The protein localises to the cytoplasm. In terms of biological role, NAD-binding protein involved in the addition of a carboxymethylaminomethyl (cmnm) group at the wobble position (U34) of certain tRNAs, forming tRNA-cmnm(5)s(2)U34. The polypeptide is tRNA uridine 5-carboxymethylaminomethyl modification enzyme MnmG (Citrobacter koseri (strain ATCC BAA-895 / CDC 4225-83 / SGSC4696)).